The chain runs to 468 residues: ATP synthase subunit beta (468 aa).

Residue 148-155 (GGAGVGKT) participates in ATP binding.

This sequence belongs to the ATPase alpha/beta chains family. F-type ATPases have 2 components, CF(1) - the catalytic core - and CF(0) - the membrane proton channel. CF(1) has five subunits: alpha(3), beta(3), gamma(1), delta(1), epsilon(1). CF(0) has three main subunits: a(1), b(2) and c(9-12). The alpha and beta chains form an alternating ring which encloses part of the gamma chain. CF(1) is attached to CF(0) by a central stalk formed by the gamma and epsilon chains, while a peripheral stalk is formed by the delta and b chains.

It is found in the cell membrane. It carries out the reaction ATP + H2O + 4 H(+)(in) = ADP + phosphate + 5 H(+)(out). In terms of biological role, produces ATP from ADP in the presence of a proton gradient across the membrane. The catalytic sites are hosted primarily by the beta subunits. The protein is ATP synthase subunit beta of Stenotrophomonas maltophilia (strain K279a).